An 88-amino-acid chain; its full sequence is MANSKSAKKRALQSEKRRQHNASRRSMLRTYVKKVIAAIRAGDHKTATEAFAAAQPIVDRMATKGLIHKNKAARHKARLNAKIKALVA.

A disordered region spans residues 1 to 27 (MANSKSAKKRALQSEKRRQHNASRRSM).

It belongs to the bacterial ribosomal protein bS20 family.

In terms of biological role, binds directly to 16S ribosomal RNA. The sequence is that of Small ribosomal subunit protein bS20 from Shewanella oneidensis (strain ATCC 700550 / JCM 31522 / CIP 106686 / LMG 19005 / NCIMB 14063 / MR-1).